Consider the following 148-residue polypeptide: Deoxyuridine 5'-triphosphate nucleotidohydrolase (148 aa).

Positions 69, 82, 85, 88, 137, 142, and 143 each coordinate dUMP.

It belongs to the dUTPase family. Homotrimer. Mg(2+) is required as a cofactor.

It carries out the reaction dUTP + H2O = dUMP + diphosphate + H(+). It functions in the pathway pyrimidine metabolism; dUMP biosynthesis; dUMP from dCTP (dUTP route): step 2/2. In terms of biological role, involved in nucleotide metabolism via production of dUMP, the immediate precursor of thymidine nucleotides, and decreases the intracellular concentration of dUTP so that uracil cannot be incorporated into DNA. The protein is Deoxyuridine 5'-triphosphate nucleotidohydrolase (DUT1) of Kluyveromyces lactis (strain ATCC 8585 / CBS 2359 / DSM 70799 / NBRC 1267 / NRRL Y-1140 / WM37) (Yeast).